The sequence spans 528 residues: Lysine--tRNA ligase (528 aa).

The 'HIGH' region signature appears at 44–52; that stretch reads PSGLPHIGT. A 'KMSKS' region motif is present at residues 290–294; that stretch reads KISKS. Lys293 contributes to the ATP binding site.

Belongs to the class-I aminoacyl-tRNA synthetase family.

Its subcellular location is the cytoplasm. The catalysed reaction is tRNA(Lys) + L-lysine + ATP = L-lysyl-tRNA(Lys) + AMP + diphosphate. The protein is Lysine--tRNA ligase (lysS) of Rickettsia prowazekii (strain Madrid E).